Here is a 92-residue protein sequence, read N- to C-terminus: Small ribosomal subunit protein uS19 (92 aa).

Belongs to the universal ribosomal protein uS19 family.

Protein S19 forms a complex with S13 that binds strongly to the 16S ribosomal RNA. The protein is Small ribosomal subunit protein uS19 of Prochlorococcus marinus (strain MIT 9312).